The primary structure comprises 938 residues: Isoleucine--tRNA ligase (938 aa).

Positions 58-68 (PYANGNIHIGH) match the 'HIGH' region motif. Position 562 (Glu-562) interacts with L-isoleucyl-5'-AMP. Residues 603–607 (KMSKS) carry the 'KMSKS' region motif. Lys-606 is an ATP binding site. Residues Cys-901, Cys-904, Cys-921, and Cys-924 each coordinate Zn(2+).

It belongs to the class-I aminoacyl-tRNA synthetase family. IleS type 1 subfamily. As to quaternary structure, monomer. Zn(2+) is required as a cofactor.

Its subcellular location is the cytoplasm. The enzyme catalyses tRNA(Ile) + L-isoleucine + ATP = L-isoleucyl-tRNA(Ile) + AMP + diphosphate. Its function is as follows. Catalyzes the attachment of isoleucine to tRNA(Ile). As IleRS can inadvertently accommodate and process structurally similar amino acids such as valine, to avoid such errors it has two additional distinct tRNA(Ile)-dependent editing activities. One activity is designated as 'pretransfer' editing and involves the hydrolysis of activated Val-AMP. The other activity is designated 'posttransfer' editing and involves deacylation of mischarged Val-tRNA(Ile). The chain is Isoleucine--tRNA ligase from Actinobacillus pleuropneumoniae serotype 5b (strain L20).